A 122-amino-acid polypeptide reads, in one-letter code: Small ribosomal subunit protein uS13 (122 aa).

The segment at 98-122 (VRGQRTHTNARTRKGPAKAIAGKKK) is disordered.

The protein belongs to the universal ribosomal protein uS13 family. Part of the 30S ribosomal subunit. Forms a loose heterodimer with protein S19. Forms two bridges to the 50S subunit in the 70S ribosome.

Functionally, located at the top of the head of the 30S subunit, it contacts several helices of the 16S rRNA. In the 70S ribosome it contacts the 23S rRNA (bridge B1a) and protein L5 of the 50S subunit (bridge B1b), connecting the 2 subunits; these bridges are implicated in subunit movement. Contacts the tRNAs in the A and P-sites. The polypeptide is Small ribosomal subunit protein uS13 (Jannaschia sp. (strain CCS1)).